Consider the following 69-residue polypeptide: Cold shock-like protein CspC (69 aa).

The 61-residue stretch at 6–66 (GQVKWFNESK…GQKGPAAVNV (61 aa)) folds into the CSD domain.

The protein localises to the cytoplasm. This chain is Cold shock-like protein CspC (cspC), found in Shigella flexneri.